We begin with the raw amino-acid sequence, 646 residues long: Acetyl-coenzyme A synthetase (646 aa).

Residues 190-193 (RAGK) and T309 each bind CoA. Residues 385–387 (GEP), 409–414 (DTWWQT), D498, and R513 contribute to the ATP site. Residue S521 participates in CoA binding. An ATP-binding site is contributed by R524. Residues V535, H537, and V540 each coordinate Mg(2+). R582 contacts CoA. An N6-acetyllysine modification is found at K607.

The protein belongs to the ATP-dependent AMP-binding enzyme family. It depends on Mg(2+) as a cofactor. Post-translationally, acetylated. Deacetylation by the SIR2-homolog deacetylase activates the enzyme.

The enzyme catalyses acetate + ATP + CoA = acetyl-CoA + AMP + diphosphate. Functionally, catalyzes the conversion of acetate into acetyl-CoA (AcCoA), an essential intermediate at the junction of anabolic and catabolic pathways. AcsA undergoes a two-step reaction. In the first half reaction, AcsA combines acetate with ATP to form acetyl-adenylate (AcAMP) intermediate. In the second half reaction, it can then transfer the acetyl group from AcAMP to the sulfhydryl group of CoA, forming the product AcCoA. The chain is Acetyl-coenzyme A synthetase from Pseudoalteromonas atlantica (strain T6c / ATCC BAA-1087).